Reading from the N-terminus, the 1270-residue chain is DNA-directed RNA polymerase subunit beta (1270 aa).

Belongs to the RNA polymerase beta chain family. In terms of assembly, the RNAP catalytic core consists of 2 alpha, 1 beta, 1 beta' and 1 omega subunit. When a sigma factor is associated with the core the holoenzyme is formed, which can initiate transcription.

The enzyme catalyses RNA(n) + a ribonucleoside 5'-triphosphate = RNA(n+1) + diphosphate. DNA-dependent RNA polymerase catalyzes the transcription of DNA into RNA using the four ribonucleoside triphosphates as substrates. The sequence is that of DNA-directed RNA polymerase subunit beta from Porphyromonas cangingivalis.